We begin with the raw amino-acid sequence, 523 residues long: 2-isopropylmalate synthase (523 aa).

The Pyruvate carboxyltransferase domain maps to 5-267 (VIIFDTTLRD…HTNINHHEIW (263 aa)). Residues D14, H202, H204, and N238 each coordinate Mn(2+). The interval 392 to 523 (RLDYFSVQSG…QNKENNKETV (132 aa)) is regulatory domain.

Belongs to the alpha-IPM synthase/homocitrate synthase family. LeuA type 1 subfamily. Homodimer. Mn(2+) is required as a cofactor.

It localises to the cytoplasm. It catalyses the reaction 3-methyl-2-oxobutanoate + acetyl-CoA + H2O = (2S)-2-isopropylmalate + CoA + H(+). The protein operates within amino-acid biosynthesis; L-leucine biosynthesis; L-leucine from 3-methyl-2-oxobutanoate: step 1/4. Functionally, catalyzes the condensation of the acetyl group of acetyl-CoA with 3-methyl-2-oxobutanoate (2-ketoisovalerate) to form 3-carboxy-3-hydroxy-4-methylpentanoate (2-isopropylmalate). The protein is 2-isopropylmalate synthase of Salmonella choleraesuis (strain SC-B67).